The sequence spans 632 residues: Putative ferric transport system permease protein FbpB 1 (632 aa).

15 helical membrane-spanning segments follow: residues 5–25, 37–57, 58–78, 93–113, 144–164, 178–198, 223–243, 270–290, 299–319, 330–350, 377–397, 436–456, 469–489, 490–510, and 547–567; these read SFNL…LPLL, LFLT…YKIS, MGYS…LSLA, LLCI…AIFV, LFLS…FALY, IFSI…VTLM, GFNG…FMIL, YQII…IVFI, PLVL…YIAG, LGSM…IWIG, IIGM…SIFY, IYAG…AYIV, FLTM…YILA, FNNA…SMVM, and CFIV…TSFV. An ABC transmembrane type-1 1 domain is found at 140 to 345; the sequence is ITNSLFLSGF…IFSLAIFIIQ (206 aa). In terms of domain architecture, ABC transmembrane type-1 2 spans 431–632; the sequence is LINTLIYAGI…DCRRYAYFPF (202 aa).

It belongs to the binding-protein-dependent transport system permease family. FbpB subfamily. As to quaternary structure, the complex is composed of two ATP-binding proteins (FbpC), two transmembrane proteins (FbpB) and a solute-binding protein (FbpA).

The protein resides in the cell inner membrane. In terms of biological role, part of the ABC transporter complex FbpABC (TC 3.A.1.10.1) involved in Fe(3+) ions import. Probably responsible for the translocation of the substrate across the membrane. The polypeptide is Putative ferric transport system permease protein FbpB 1 (fbpB1) (Haemophilus influenzae (strain ATCC 51907 / DSM 11121 / KW20 / Rd)).